The sequence spans 111 residues: Large ribosomal subunit protein uL22 (111 aa).

It belongs to the universal ribosomal protein uL22 family. In terms of assembly, part of the 50S ribosomal subunit.

In terms of biological role, this protein binds specifically to 23S rRNA; its binding is stimulated by other ribosomal proteins, e.g. L4, L17, and L20. It is important during the early stages of 50S assembly. It makes multiple contacts with different domains of the 23S rRNA in the assembled 50S subunit and ribosome. Functionally, the globular domain of the protein is located near the polypeptide exit tunnel on the outside of the subunit, while an extended beta-hairpin is found that lines the wall of the exit tunnel in the center of the 70S ribosome. This is Large ribosomal subunit protein uL22 from Xanthomonas euvesicatoria pv. vesicatoria (strain 85-10) (Xanthomonas campestris pv. vesicatoria).